Consider the following 370-residue polypeptide: Putative agmatine deiminase (370 aa).

The Amidino-cysteine intermediate role is filled by cysteine 361.

It belongs to the agmatine deiminase family.

The catalysed reaction is agmatine + H2O = N-carbamoylputrescine + NH4(+). This is Putative agmatine deiminase from Shewanella baltica (strain OS155 / ATCC BAA-1091).